The primary structure comprises 72 residues: DNA-directed RNA polymerase subunit epsilon (72 aa).

The protein belongs to the RNA polymerase subunit epsilon family. As to quaternary structure, RNAP is composed of a core of 2 alpha, a beta and a beta' subunit. The core is associated with a delta subunit, and at least one of epsilon or omega. When a sigma factor is associated with the core the holoenzyme is formed, which can initiate transcription.

It catalyses the reaction RNA(n) + a ribonucleoside 5'-triphosphate = RNA(n+1) + diphosphate. Its function is as follows. A non-essential component of RNA polymerase (RNAP). The chain is DNA-directed RNA polymerase subunit epsilon from Levilactobacillus brevis (strain ATCC 367 / BCRC 12310 / CIP 105137 / JCM 1170 / LMG 11437 / NCIMB 947 / NCTC 947) (Lactobacillus brevis).